Consider the following 453-residue polypeptide: Ferruginol synthase (453 aa).

The helical transmembrane segment at 15 to 35 threads the bilayer; sequence LSKKYGPLMSIHLGSLYTVIV. A heme-binding site is contributed by C397.

Belongs to the cytochrome P450 family. The cofactor is heme. Expressed in leaf glandular trichomes.

It is found in the membrane. The enzyme catalyses abieta-8,11,13-triene + reduced [NADPH--hemoprotein reductase] + O2 = ferruginol + oxidized [NADPH--hemoprotein reductase] + H2O + H(+). It carries out the reaction ferruginol + reduced [NADPH--hemoprotein reductase] + O2 = 11-hydroxyferruginol + oxidized [NADPH--hemoprotein reductase] + H2O + H(+). It catalyses the reaction miltiradiene + 2 reduced [NADPH--hemoprotein reductase] + 2 O2 = 11-oxomiltiradiene + 2 oxidized [NADPH--hemoprotein reductase] + 3 H2O + 2 H(+). Its pathway is secondary metabolite biosynthesis; terpenoid biosynthesis. Its function is as follows. Monooxygenase involved in the biosynthesis of labdane-related diterpenes natural products. Catalyzes the oxidation of abietatriene to produce ferruginol. Ferruginol is an intermediate in the biosynthesis of carnosate, a potent antioxidant. May also convert miltiradiene into 11-oxomiltiradiene. This Salvia pomifera (Apple sage) protein is Ferruginol synthase.